Consider the following 1080-residue polypeptide: Presequence protease 1, chloroplastic/mitochondrial (1080 aa).

The N-terminal 85 residues, 1-85 (MLRTVSCLAS…GQFSRLSVRA (85 aa)), are a transit peptide targeting the chloroplast and mitochondrion. At V86 the chain carries N-acetylvaline. Residue H162 coordinates Zn(2+). The Proton acceptor role is filled by E165. H166 is a binding site for Zn(2+). Residue E240 is part of the active site. Zn(2+) is bound at residue E262. Positions 571 to 612 (EKATQEEVEEKNILEKVKAAMTEEDLAELARATEELKLKQET) form a coiled coil. R705 is a Mg(2+) binding site.

Belongs to the peptidase M16 family. PreP subfamily. As to quaternary structure, homodimer. Zn(2+) serves as cofactor. Requires Mg(2+) as cofactor. Expressed only in siliques and flowers.

Its subcellular location is the plastid. It is found in the chloroplast stroma. The protein localises to the mitochondrion matrix. With respect to regulation, inactive in the absence of MgCl(2) and CaCl(2) and full activation at 10 mM concentrations of either ion. Completely inhibited by the metal chelator orthophenanthroline, but not affected by phenylmethylsulfonyl fluoride (PMSF) or N-ethylmaleimide (NEM). In terms of biological role, ATP-independent protease that degrades both mitochondrial and chloroplastic transit peptides after their cleavage. Also degrades other unstructured peptides. Specific for peptides in the range of 10 to 65 residues. Shows a preference for cleavage after small polar residues and before basic residues, with a bias for positively charged amino acid residues. The chain is Presequence protease 1, chloroplastic/mitochondrial (PREP1) from Arabidopsis thaliana (Mouse-ear cress).